The chain runs to 141 residues: Phosphoribosyl-AMP cyclohydrolase (141 aa).

A Mg(2+)-binding site is contributed by Asp-91. Residue Cys-92 coordinates Zn(2+). Mg(2+) contacts are provided by Asp-93 and Asp-95. Zn(2+)-binding residues include Cys-110 and Cys-117.

The protein belongs to the PRA-CH family. As to quaternary structure, homodimer. Requires Mg(2+) as cofactor. It depends on Zn(2+) as a cofactor.

The protein resides in the cytoplasm. It catalyses the reaction 1-(5-phospho-beta-D-ribosyl)-5'-AMP + H2O = 1-(5-phospho-beta-D-ribosyl)-5-[(5-phospho-beta-D-ribosylamino)methylideneamino]imidazole-4-carboxamide. Its pathway is amino-acid biosynthesis; L-histidine biosynthesis; L-histidine from 5-phospho-alpha-D-ribose 1-diphosphate: step 3/9. Its function is as follows. Catalyzes the hydrolysis of the adenine ring of phosphoribosyl-AMP. In Brucella anthropi (strain ATCC 49188 / DSM 6882 / CCUG 24695 / JCM 21032 / LMG 3331 / NBRC 15819 / NCTC 12168 / Alc 37) (Ochrobactrum anthropi), this protein is Phosphoribosyl-AMP cyclohydrolase.